We begin with the raw amino-acid sequence, 246 residues long: Chanoclavine-I dehydrogenase easD (246 aa).

A signal peptide spans 1 to 20 (MASVSSKIFAITGGASGIGA). NADP(+) contacts are provided by I18, D66, R132, Y169, and K173. The active-site Proton donor is Y169. K173 functions as the Lowers pKa of active site Tyr in the catalytic mechanism.

It belongs to the short-chain dehydrogenases/reductases (SDR) family. Homotetramer.

It catalyses the reaction chanoclavine-I + NAD(+) = chanoclavine-I aldehyde + NADH + H(+). Its pathway is alkaloid biosynthesis; ergot alkaloid biosynthesis. Functionally, chanoclavine-I dehydrogenase; part of the gene cluster that mediates the biosynthesis of fungal ergot alkaloid. DmaW catalyzes the first step of ergot alkaloid biosynthesis by condensing dimethylallyl diphosphate (DMAP) and tryptophan to form 4-dimethylallyl-L-tryptophan. The second step is catalyzed by the methyltransferase easF that methylates 4-dimethylallyl-L-tryptophan in the presence of S-adenosyl-L-methionine, resulting in the formation of 4-dimethylallyl-L-abrine. The catalase easC and the FAD-dependent oxidoreductase easE then transform 4-dimethylallyl-L-abrine to chanoclavine-I which is further oxidized by easD in the presence of NAD(+), resulting in the formation of chanoclavine-I aldehyde. Chanoclavine-I aldehyde is the precursor of ergoamides and ergopeptines in Clavicipitaceae, and clavine-type alcaloids such as fumiclavine in Trichocomaceae. However, the metabolites downstream of chanoclavine-I aldehyde in Arthrodermataceae have not been identified yet. In Arthroderma benhamiae (strain ATCC MYA-4681 / CBS 112371) (Trichophyton mentagrophytes), this protein is Chanoclavine-I dehydrogenase easD.